A 187-amino-acid polypeptide reads, in one-letter code: uncharacterized protein (187 aa).

The HTH tetR-type domain occupies 6-66 (TDLAEQIFSA…QFAHRVFSMF (61 aa)). A DNA-binding region (H-T-H motif) is located at residues 29–48 (SMLKLAKEANVAAGTIYLYF).

This is an uncharacterized protein from Haemophilus influenzae (strain ATCC 51907 / DSM 11121 / KW20 / Rd).